Here is a 594-residue protein sequence, read N- to C-terminus: Solute carrier family 22 member 14 (594 aa).

Residues 1–70 (MAGEENFKEE…EFGTFQQRLV (70 aa)) lie on the Cytoplasmic side of the membrane. Residues 71-91 (ALTFIPSIMSAFFMFADHFVF) form a helical membrane-spanning segment. Residues 92 to 184 (TAQKPYCNTS…LVCGMETKKD (93 aa)) lie on the Extracellular side of the membrane. N-linked (GlcNAc...) asparagine glycosylation is found at asparagine 99, asparagine 117, asparagine 125, and asparagine 150. Residues 185–205 (TAQIMFMAGLPIGSLIFRLIT) form a helical membrane-spanning segment. Residues 206-210 (DKMGR) are Cytoplasmic-facing. The helical transmembrane segment at 211-231 (YPAILLSLLGLIIFGFGTAFM) threads the bilayer. At 232 to 235 (NSFH) the chain is on the extracellular side. The chain crosses the membrane as a helical span at residues 236 to 256 (LYLFFRFGISQSVVGYAISSI). The Cytoplasmic segment spans residues 257–270 (SLATEWLVGEHRAH). The chain crosses the membrane as a helical span at residues 271 to 291 (AIILGHCFFAVGAVLLTGIAY). Topologically, residues 292-297 (SLPHWQ) are extracellular. Residues 298–318 (LLFLVGGILVIPFISYIWILP) form a helical membrane-spanning segment. At 319 to 379 (ESPRWLMMKG…DFCKNRQLCK (61 aa)) the chain is on the cytoplasmic side. Residues 380-400 (VTLVMSCVWFTVSYTYFTLSL) traverse the membrane as a helical segment. Over 401–408 (RMRELGVS) the chain is Extracellular. A helical membrane pass occupies residues 409–431 (VHFRHVVPSIMEVPARLCCIFLL). Residues 432–437 (QQIGRK) lie on the Cytoplasmic side of the membrane. Residues 438-458 (WSLAVTLLQAIIWCLLLLFLP) form a helical membrane-spanning segment. Residues 459–488 (EGEDGLRLKWPRCPATELKSMTILVLMLRE) are Extracellular-facing. Residues 489–509 (FSLAATVTVFFLYTAELLPTV) traverse the membrane as a helical segment. Over 510–512 (LRA) the chain is Cytoplasmic. The helical transmembrane segment at 513-533 (TGLGLVSLASVAGAILSLTII) threads the bilayer. Residues 534 to 538 (SQTPS) lie on the Extracellular side of the membrane. A helical membrane pass occupies residues 539 to 559 (LLPIFLCCVLAIVAFSLSSLL). Residues 560-594 (PETRDQPLSESLNHSSQIRNKVKDMKTKETSSDDV) are Cytoplasmic-facing. The segment at 566-594 (PLSESLNHSSQIRNKVKDMKTKETSSDDV) is disordered. Over residues 567–578 (LSESLNHSSQIR) the composition is skewed to polar residues. A compositionally biased stretch (basic and acidic residues) spans 580–594 (KVKDMKTKETSSDDV).

Belongs to the major facilitator (TC 2.A.1) superfamily. Organic cation transporter (TC 2.A.1.19) family. As to expression, ubiquitous.

Its subcellular location is the mitochondrion inner membrane. It is found in the cell projection. It localises to the cilium. The protein localises to the flagellum membrane. It catalyses the reaction riboflavin(in) = riboflavin(out). Its function is as follows. Riboflavin transporter localized at the inner mitochondrial membrane of the spermatozoa midpiece, which is required for male fertility. SLC22A14-mediated riboflavin transport is essential for spermatozoa energy generation and motility: riboflavin is the precursor of FMN and FAD, which are coenzymes of many enzymes in the TCA cycle (the citric acid cycle) in mitochondria. Required for sperm motility and normal sperm flagellar structure. In Homo sapiens (Human), this protein is Solute carrier family 22 member 14.